Consider the following 232-residue polypeptide: CMP-N,N'-diacetyllegionaminic acid synthase (232 aa).

The protein belongs to the CMP-NeuNAc synthase family.

It catalyses the reaction N,N-diacetyllegionaminate + CTP = CMP-N,N-diacetyllegionaminate + diphosphate. In terms of biological role, involved in biosynthesis of legionaminic acid (5,7-diamino-3,5,7,9-tetradeoxy-D-glycero-D-galacto-non-2-ulosonic acid)(Leg), a sialic acid-like derivative that is incorporated into virulence-associated cell surface glycoconjugates such as lipopolysaccharide (LPS) which could be a key determinant in the ability of L.pneumophila to inhibit the fusion of phagosomes with lysosomes. LPS contains a majority alpha2,4-linked homomer of legionaminic acid. Catalyzes the conversion of N,N'-diacetyllegionaminic acid (Leg5Ac7Ac) and CTP into CMP-N,N'-diacetyllegionaminic acid (CMP-Leg5Ac7Ac). The polypeptide is CMP-N,N'-diacetyllegionaminic acid synthase (neuA) (Legionella pneumophila subsp. pneumophila (strain Philadelphia 1 / ATCC 33152 / DSM 7513)).